Here is a 1203-residue protein sequence, read N- to C-terminus: DNA-directed RNA polymerase subunit beta (1203 aa).

Basic and acidic residues predominate over residues 1174–1195 (AAQEAKAAFEAEEAEKATKAEA). Residues 1174–1203 (AAQEAKAAFEAEEAEKATKAEATEEAAEQE) form a disordered region.

The protein belongs to the RNA polymerase beta chain family. As to quaternary structure, the RNAP catalytic core consists of 2 alpha, 1 beta, 1 beta' and 1 omega subunit. When a sigma factor is associated with the core the holoenzyme is formed, which can initiate transcription.

It catalyses the reaction RNA(n) + a ribonucleoside 5'-triphosphate = RNA(n+1) + diphosphate. In terms of biological role, DNA-dependent RNA polymerase catalyzes the transcription of DNA into RNA using the four ribonucleoside triphosphates as substrates. The polypeptide is DNA-directed RNA polymerase subunit beta (Streptococcus pneumoniae (strain ATCC 700669 / Spain 23F-1)).